Here is a 149-residue protein sequence, read N- to C-terminus: MADQLTDDQISEFKEAFSLFDKDGDGCITTKELGTVMRSLGQNPTEAELQDMINEVDADGNGTIDFPEFLNLMARKMKDTDSEEELKEAFRVFDKDQNGFISAAELRHVMTNLGEKLTDEEVDEMIKEADVDGDGQINYEEFVKVMMAK.

4 EF-hand domains span residues 8–43 (DQIS…LGQN), 44–79 (PTEA…KMKD), 81–116 (DSEE…LGEK), and 117–149 (LTDE…MMAK). Residues aspartate 21, aspartate 23, aspartate 25, cysteine 27, glutamate 32, aspartate 57, aspartate 59, asparagine 61, threonine 63, glutamate 68, aspartate 94, aspartate 96, asparagine 98, glutamate 105, aspartate 130, aspartate 132, aspartate 134, glutamine 136, and glutamate 141 each contribute to the Ca(2+) site.

Belongs to the calmodulin family. As to quaternary structure, interacts with KCBP and CIP111. Binds to IQD1 and IQD20.

It is found in the cytoplasm. The protein resides in the cytoskeleton. Its function is as follows. Calmodulin mediates the control of a large number of enzymes, ion channels and other proteins by Ca(2+). Among the enzymes to be stimulated by the calmodulin-Ca(2+) complex are a number of protein kinases and phosphatases. The chain is Calmodulin-2 (CAM2) from Arabidopsis thaliana (Mouse-ear cress).